Consider the following 1268-residue polypeptide: SR-related and CTD-associated factor 8 (1268 aa).

A CID domain is found at 1-139 (MEAVKTFNSE…PLLDMAAGIP (139 aa)). Thr-6 carries the post-translational modification Phosphothreonine. Lys-18 participates in a covalent cross-link: Glycyl lysine isopeptide (Lys-Gly) (interchain with G-Cter in SUMO1). Residues 270–283 (GEDSEHSEESKKEM) are compositionally biased toward basic and acidic residues. Disordered stretches follow at residues 270 to 290 (GEDSEHSEESKKEMPTPQLSH), 322 to 355 (QQQPQKVTPQDSQEGTFGSEHSASPSQGSSQQHF), and 385 to 469 (EIFE…PVRS). Ser-273 is subject to Phosphoserine. Residues 327–354 (KVTPQDSQEGTFGSEHSASPSQGSSQQH) are compositionally biased toward polar residues. A compositionally biased stretch (basic residues) spans 394–443 (VAVRSRSRTHSRSRSRSPRKRRSRSRSGSRKRKHRKRSRSHSREKKRKAS). Positions 447 to 461 (SSERRAREREKERQK) are enriched in basic and acidic residues. One can recognise an RRM domain in the interval 477 to 551 (TTLWVGQVDK…KVIKIAWALN (75 aa)). Residue Ser-617 is modified to Phosphoserine. The disordered stretch occupies residues 776-807 (QIPSGENTRPVIPSDIPSSAAMLAQPPGASST). Asymmetric dimethylarginine is present on residues Arg-915, Arg-925, and Arg-936. Disordered stretches follow at residues 984 to 1012 (PGRPSIDNVPNPDKRIPLGNDNIQQEGDR) and 1040 to 1065 (RLDPREGPGRPPLDARDHFGRPPVDM). An Asymmetric dimethylarginine modification is found at Arg-1071. The interval 1199-1268 (ATSQRKGDNV…VVESTETEGT (70 aa)) is disordered. Positions 1249–1262 (GTVAGVESEAVVES) are enriched in low complexity.

As to quaternary structure, interacts with POLR2A; via C-terminal heptapeptide repeat domain (CTD) phosphorylated at 'Ser-2' and 'Ser-5'. Identified in a complex with CDC5L and other spliceosomal proteins.

The protein resides in the nucleus. Its subcellular location is the nucleus matrix. Its function is as follows. Anti-terminator protein required to prevent early mRNA termination during transcription. Together with SCAF4, acts by suppressing the use of early, alternative poly(A) sites, thereby preventing the accumulation of non-functional truncated proteins. Mechanistically, associates with the phosphorylated C-terminal heptapeptide repeat domain (CTD) of the largest RNA polymerase II subunit (POLR2A), and subsequently binds nascent RNA upstream of early polyadenylation sites to prevent premature mRNA transcript cleavage and polyadenylation. Independently of SCAF4, also acts as a positive regulator of transcript elongation. This Mus musculus (Mouse) protein is SR-related and CTD-associated factor 8.